The primary structure comprises 585 residues: 3-hydroxy-3-methylglutaryl-coenzyme A reductase 1 (585 aa).

2 helical membrane passes run 38–58 and 77–97; these read LYLT…FLLC and EIVA…FFGI. Positions 98–169 are linker; that stretch reads DFVQSLVLRP…DEMPVTVMTE (72 aa). The tract at residues 170–585 is catalytic; the sequence is EDEEIIRSVV…SSKDVSKVSS (416 aa). Glu264 acts as the Charge relay system in catalysis. The N-linked (GlcNAc...) asparagine glycan is linked to Asn328. Catalysis depends on Lys396, which acts as the Charge relay system. N-linked (GlcNAc...) asparagine glycosylation occurs at Asn441. Catalysis depends on Asp472, which acts as the Charge relay system. The active-site Proton donor is the His570. An N-linked (GlcNAc...) asparagine glycan is attached at Asn574.

This sequence belongs to the HMG-CoA reductase family.

Its subcellular location is the endoplasmic reticulum membrane. The protein resides in the mitochondrion membrane. The protein localises to the plastid membrane. It carries out the reaction (R)-mevalonate + 2 NADP(+) + CoA = (3S)-3-hydroxy-3-methylglutaryl-CoA + 2 NADPH + 2 H(+). Its pathway is metabolic intermediate biosynthesis; (R)-mevalonate biosynthesis; (R)-mevalonate from acetyl-CoA: step 3/3. Catalyzes the synthesis of mevalonate. The specific precursor of all isoprenoid compounds present in plants. In Gossypium hirsutum (Upland cotton), this protein is 3-hydroxy-3-methylglutaryl-coenzyme A reductase 1 (HMG1).